We begin with the raw amino-acid sequence, 154 residues long: Prefoldin subunit 5 (154 aa).

Residue Ala2 is modified to N-acetylalanine. An N6-acetyllysine modification is found at Lys42. Position 56 is a phosphoserine (Ser56).

The protein belongs to the prefoldin subunit alpha family. In terms of assembly, heterohexamer of two PFD-alpha type and four PFD-beta type subunits. Binds to MYC; interacts with its N-terminal domain. As to expression, highly expressed in pancreas and skeletal muscle and moderately in other tissues.

It is found in the nucleus. The protein localises to the cytoplasm. Functionally, binds specifically to cytosolic chaperonin (c-CPN) and transfers target proteins to it. Binds to nascent polypeptide chain and promotes folding in an environment in which there are many competing pathways for nonnative proteins. Represses the transcriptional activity of MYC. This chain is Prefoldin subunit 5 (PFDN5), found in Homo sapiens (Human).